Consider the following 415-residue polypeptide: ATP-dependent RNA helicase RhlB (415 aa).

The short motif at 9–37 is the Q motif element; the sequence is QRFSALPLHPIVRGALAKKGFDFCTPIQA. The Helicase ATP-binding domain maps to 40–218; sequence LPISLNGRDV…FEDMNDPEYI (179 aa). Residue 53-60 coordinates ATP; it reads AQTGTGKT. The DEAD box motif lies at 164–167; that stretch reads DEAD. Residues 241-389 form the Helicase C-terminal domain; it reads DKMALLLTLM…VSQYETEALL (149 aa).

This sequence belongs to the DEAD box helicase family. RhlB subfamily. As to quaternary structure, component of the RNA degradosome, which is a multiprotein complex involved in RNA processing and mRNA degradation.

The protein localises to the cytoplasm. The enzyme catalyses ATP + H2O = ADP + phosphate + H(+). Its function is as follows. DEAD-box RNA helicase involved in RNA degradation. Has RNA-dependent ATPase activity and unwinds double-stranded RNA. The chain is ATP-dependent RNA helicase RhlB from Haemophilus influenzae (strain PittGG).